Here is a 461-residue protein sequence, read N- to C-terminus: Chromosomal replication initiator protein DnaA (461 aa).

The segment at methionine 1–valine 87 is domain I, interacts with DnaA modulators. A domain II region spans residues valine 87–serine 124. The domain III, AAA+ region stretch occupies residues asparagine 125–alanine 341. 4 residues coordinate ATP: glycine 169, glycine 171, lysine 172, and threonine 173. Positions asparagine 342–serine 461 are domain IV, binds dsDNA.

It belongs to the DnaA family. Oligomerizes as a right-handed, spiral filament on DNA at oriC.

The protein localises to the cytoplasm. In terms of biological role, plays an essential role in the initiation and regulation of chromosomal replication. ATP-DnaA binds to the origin of replication (oriC) to initiate formation of the DNA replication initiation complex once per cell cycle. Binds the DnaA box (a 9 base pair repeat at the origin) and separates the double-stranded (ds)DNA. Forms a right-handed helical filament on oriC DNA; dsDNA binds to the exterior of the filament while single-stranded (ss)DNA is stabiized in the filament's interior. The ATP-DnaA-oriC complex binds and stabilizes one strand of the AT-rich DNA unwinding element (DUE), permitting loading of DNA polymerase. After initiation quickly degrades to an ADP-DnaA complex that is not apt for DNA replication. Binds acidic phospholipids. This Shewanella piezotolerans (strain WP3 / JCM 13877) protein is Chromosomal replication initiator protein DnaA.